The chain runs to 695 residues: Highly divergent homeobox (695 aa).

2 consecutive DNA-binding regions (homeobox) follow at residues 3–63 (LRSV…SSKS) and 440–503 (ALQD…RLMG). Residues 56–81 (RRKMSSKSALESGGAPPGTAHTAPSV) are disordered. The segment at 653-695 (QQALLSDLPPELEEMDFNHTSPEPDDTSFSLSSLSEKNASDSL) is disordered. Positions 679-695 (TSFSLSSLSEKNASDSL) are enriched in polar residues.

The protein localises to the nucleus. The polypeptide is Highly divergent homeobox (HDX) (Gallus gallus (Chicken)).